Here is a 332-residue protein sequence, read N- to C-terminus: tRNA dimethylallyltransferase (332 aa).

14 to 21 (GPTASGKT) lines the ATP pocket. 16 to 21 (TASGKT) lines the substrate pocket. An interaction with substrate tRNA region spans residues 39–42 (DSMQ). The tract at residues 313-332 (KRSSKHDCKPQHPRSSTREL) is disordered. Residues 317–332 (KHDCKPQHPRSSTREL) are compositionally biased toward basic and acidic residues.

Belongs to the IPP transferase family. Monomer. Mg(2+) serves as cofactor.

The enzyme catalyses adenosine(37) in tRNA + dimethylallyl diphosphate = N(6)-dimethylallyladenosine(37) in tRNA + diphosphate. Its function is as follows. Catalyzes the transfer of a dimethylallyl group onto the adenine at position 37 in tRNAs that read codons beginning with uridine, leading to the formation of N6-(dimethylallyl)adenosine (i(6)A). The chain is tRNA dimethylallyltransferase from Staphylococcus haemolyticus (strain JCSC1435).